The primary structure comprises 397 residues: Elongation factor Tu (397 aa).

A tr-type G domain is found at 10–206 (KPHVNIGTIG…AVDTAIPEPE (197 aa)). The tract at residues 19 to 26 (GHIDHGKT) is G1. 19–26 (GHIDHGKT) lines the GTP pocket. Residue T26 coordinates Mg(2+). Residues 62–66 (GITIS) form a G2 region. Positions 83–86 (DCPG) are G3. GTP-binding positions include 83-87 (DCPGH) and 138-141 (NKAD). The G4 stretch occupies residues 138 to 141 (NKAD). The interval 176 to 178 (SAL) is G5.

This sequence belongs to the TRAFAC class translation factor GTPase superfamily. Classic translation factor GTPase family. EF-Tu/EF-1A subfamily. As to quaternary structure, monomer.

It localises to the cytoplasm. It catalyses the reaction GTP + H2O = GDP + phosphate + H(+). GTP hydrolase that promotes the GTP-dependent binding of aminoacyl-tRNA to the A-site of ribosomes during protein biosynthesis. This is Elongation factor Tu from Kineococcus radiotolerans (strain ATCC BAA-149 / DSM 14245 / SRS30216).